An 88-amino-acid polypeptide reads, in one-letter code: Sec-independent protein translocase protein TatA (88 aa).

Residues 1–21 (MGGISIWQLLIIAVIVVLLFG) form a helical membrane-spanning segment. The disordered stretch occupies residues 41–88 (KAMGDENQKETNNAEKTTNDADFDTKNLAQKTSTEEKSTTESKNKEQV). Composition is skewed to basic and acidic residues over residues 42–65 (AMGDENQKETNNAEKTTNDADFDT) and 73–88 (STEEKSTTESKNKEQV).

This sequence belongs to the TatA/E family. As to quaternary structure, the Tat system comprises two distinct complexes: a TatABC complex, containing multiple copies of TatA, TatB and TatC subunits, and a separate TatA complex, containing only TatA subunits. Substrates initially bind to the TatABC complex, which probably triggers association of the separate TatA complex to form the active translocon.

The protein resides in the cell inner membrane. Functionally, part of the twin-arginine translocation (Tat) system that transports large folded proteins containing a characteristic twin-arginine motif in their signal peptide across membranes. TatA could form the protein-conducting channel of the Tat system. This Proteus mirabilis (strain HI4320) protein is Sec-independent protein translocase protein TatA.